We begin with the raw amino-acid sequence, 115 residues long: uncharacterized protein (115 aa).

The disordered stretch occupies residues 9-30; sequence EGLRERGASGKNEQKKKKKEKI.

This is an uncharacterized protein from Saccharomyces cerevisiae (strain ATCC 204508 / S288c) (Baker's yeast).